The primary structure comprises 376 residues: Probable inactive protein kinase At3g63330 (376 aa).

A Protein kinase domain is found at 1–370 (MVERGPTVYL…VDEALQHPYF (370 aa)).

This sequence belongs to the protein kinase superfamily. Ser/Thr protein kinase family.

The sequence is that of Probable inactive protein kinase At3g63330 from Arabidopsis thaliana (Mouse-ear cress).